A 105-amino-acid polypeptide reads, in one-letter code: UPF0045 protein ECM15 (105 aa).

Belongs to the UPF0045 family.

This chain is UPF0045 protein ECM15 (ECM15), found in Eremothecium gossypii (strain ATCC 10895 / CBS 109.51 / FGSC 9923 / NRRL Y-1056) (Yeast).